Here is a 374-residue protein sequence, read N- to C-terminus: 2,7-anhydro-N-acetylneuraminate hydratase (374 aa).

NAD(+) contacts are provided by Tyr-13, Phe-14, Asp-35, Asn-38, Thr-70, Asn-72, His-75, Glu-92, Lys-93, Trp-162, and Lys-163.

The protein belongs to the Gfo/Idh/MocA family. As to quaternary structure, homodimer. It depends on NAD(+) as a cofactor.

It catalyses the reaction N-acetyl-2,7-anhydro-alpha-neuraminate + H2O = N-acetyl-alpha-neuraminate. With respect to regulation, neu5Ac is produced in the presence of NAD(+) or NADH, but not in the presence of FAD. Its function is as follows. Hydratase involved in the degradation of sialic acids, which are present in the host mucus layer and represent a much-coveted source of nutrients for R.gnavus, a prevalent member of the normal gut microbiota. Catalyzes the reversible conversion of the dehydrated form of N-acetylneuraminate (Neu5Ac), 2,7-anhydro-N-acetylneuraminate (2,7-AN), to Neu5Ac, allowing growth on 2,7-AN produced by the IT-sialidase NanH. Acts through a multistep mechanism involving a keto intermediate and cycling of NADH/NAD(+). This chain is 2,7-anhydro-N-acetylneuraminate hydratase, found in Mediterraneibacter gnavus (strain ATCC 29149 / DSM 114966 / JCM 6515 / VPI C7-9) (Ruminococcus gnavus).